A 1054-amino-acid polypeptide reads, in one-letter code: Trehalose synthase complex regulatory subunit TPS3 (1054 aa).

The tract at residues 112–133 (AANSGIPPANNPVSSGSTAQRP) is disordered. The segment covering 122-132 (NPVSSGSTAQR) has biased composition (polar residues). Serine 148, serine 150, and serine 181 each carry phosphoserine. Disordered stretches follow at residues 155-203 (ASSI…PVSK) and 223-250 (QQQA…SSSN). The segment covering 170–182 (LSSSLMKNPNLSF) has biased composition (polar residues). Residues 235 to 249 (SGSTAGDSSIASSSS) show a composition bias toward low complexity. Threonine 265 is modified (phosphothreonine). Phosphoserine is present on residues serine 267 and serine 273. Residues 287-778 (KFGGYSNNAK…SNQETSTVFN (492 aa)) are glycosyltransferase. Residue serine 960 is modified to Phosphoserine.

It in the N-terminal section; belongs to the glycosyltransferase 20 family. As to quaternary structure, the trehalose synthase complex is composed of the two catalytic subunits TPS1 and TPS2 and at least one of the two regulatory subunits TPS3 or TSL1.

The protein localises to the cytoplasm. In terms of biological role, regulatory subunit of the trehalose synthase complex that catalyzes the production of trehalose from glucose-6-phosphate and UDP-glucose in a two step process. May stabilize the trehalose synthase complex. The chain is Trehalose synthase complex regulatory subunit TPS3 (TPS3) from Saccharomyces cerevisiae (strain ATCC 204508 / S288c) (Baker's yeast).